The primary structure comprises 467 residues: Siroheme synthase 2 (467 aa).

Residues methionine 1 to isoleucine 204 are precorrin-2 dehydrogenase /sirohydrochlorin ferrochelatase. Residues glutamate 22–isoleucine 23 and cysteine 43–serine 44 contribute to the NAD(+) site. Serine 128 is modified (phosphoserine). The uroporphyrinogen-III C-methyltransferase stretch occupies residues glycine 216–alanine 467. Proline 225 is a binding site for S-adenosyl-L-methionine. The Proton acceptor role is filled by aspartate 248. Lysine 270 serves as the catalytic Proton donor. S-adenosyl-L-methionine contacts are provided by residues glycine 301–aspartate 303, isoleucine 306, threonine 331–alanine 332, methionine 382, and glycine 411.

The protein in the N-terminal section; belongs to the precorrin-2 dehydrogenase / sirohydrochlorin ferrochelatase family. It in the C-terminal section; belongs to the precorrin methyltransferase family.

It carries out the reaction uroporphyrinogen III + 2 S-adenosyl-L-methionine = precorrin-2 + 2 S-adenosyl-L-homocysteine + H(+). The catalysed reaction is precorrin-2 + NAD(+) = sirohydrochlorin + NADH + 2 H(+). The enzyme catalyses siroheme + 2 H(+) = sirohydrochlorin + Fe(2+). The protein operates within cofactor biosynthesis; adenosylcobalamin biosynthesis; precorrin-2 from uroporphyrinogen III: step 1/1. Its pathway is cofactor biosynthesis; adenosylcobalamin biosynthesis; sirohydrochlorin from precorrin-2: step 1/1. It participates in porphyrin-containing compound metabolism; siroheme biosynthesis; precorrin-2 from uroporphyrinogen III: step 1/1. It functions in the pathway porphyrin-containing compound metabolism; siroheme biosynthesis; siroheme from sirohydrochlorin: step 1/1. The protein operates within porphyrin-containing compound metabolism; siroheme biosynthesis; sirohydrochlorin from precorrin-2: step 1/1. Multifunctional enzyme that catalyzes the SAM-dependent methylations of uroporphyrinogen III at position C-2 and C-7 to form precorrin-2 via precorrin-1. Then it catalyzes the NAD-dependent ring dehydrogenation of precorrin-2 to yield sirohydrochlorin. Finally, it catalyzes the ferrochelation of sirohydrochlorin to yield siroheme. This Serratia proteamaculans (strain 568) protein is Siroheme synthase 2.